The primary structure comprises 123 residues: Unknown 12C protein (123 aa).

Positions 1–17 are cleaved as a signal peptide; the sequence is MMSALFLVLSVSLLVSG.

Contains 6 disulfide bonds. As to expression, expressed in acontia, a specialised envenomation structure laden with batteries of venom-containing nematocysts found only in the superfamily Metridioidea.

Its subcellular location is the secreted. The protein resides in the nematocyst. Functionally, cysteine-rich protein with probable toxin activity. The polypeptide is Unknown 12C protein (Calliactis polypus (Hermit crab anemone)).